Here is a 325-residue protein sequence, read N- to C-terminus: Brain mitochondrial carrier protein 1 (325 aa).

A run of 6 helical transmembrane segments spans residues 38–54 (GLNWKPFVYGGLASIVA), 112–128 (LRQASYGTIKIGIYQSL), 145–165 (MICGVVSGVISSTIANPTDVL), 199–215 (GVVPTAQRAAIVVGVEL), 240–256 (VSSFTCGLAGALASNPV), and 298–315 (GFWPNWLRLGPWNIIFFI). Solcar repeat units follow at residues 42–131 (KPFV…LKRL), 139–224 (ETLL…TKKH), and 233–323 (DTIL…LKRL).

The protein belongs to the mitochondrial carrier (TC 2.A.29) family. In terms of assembly, homotetramer. In terms of tissue distribution, mainly expressed in brain, particularly abundant in cortex, hippocampus thalamus, amygdala and hypothalamus. Highly expressed in heart and kidney, but not liver or lung (at protein level). In the nervous system, expressed in cortex, basal ganglia, substantia nigra, cerebellum, and spinal cord (at protein level).

The protein localises to the mitochondrion inner membrane. It catalyses the reaction sulfite(in) + sulfate(out) = sulfite(out) + sulfate(in). It carries out the reaction thiosulfate(in) + sulfate(out) = thiosulfate(out) + sulfate(in). The catalysed reaction is sulfate(out) + phosphate(in) = sulfate(in) + phosphate(out). The enzyme catalyses oxalate(in) + sulfate(out) = oxalate(out) + sulfate(in). It catalyses the reaction malonate(in) + sulfate(out) = malonate(out) + sulfate(in). It carries out the reaction maleate(in) + sulfate(out) = maleate(out) + sulfate(in). The catalysed reaction is (S)-malate(in) + sulfate(out) = (S)-malate(out) + sulfate(in). The enzyme catalyses (3S)-citramalate(in) + sulfate(out) = (3S)-citramalate(out) + sulfate(in). It catalyses the reaction (3R)-citramalate(in) + sulfate(out) = (3R)-citramalate(out) + sulfate(in). It carries out the reaction sulfate(out) + succinate(in) = sulfate(in) + succinate(out). The catalysed reaction is (S,S)-tartrate(in) + sulfate(out) = (S,S)-tartrate(out) + sulfate(in). The enzyme catalyses (2R,3R)-tartrate(in) + sulfate(out) = (2R,3R)-tartrate(out) + sulfate(in). It catalyses the reaction D-aspartate(in) + sulfate(out) = D-aspartate(out) + sulfate(in). It carries out the reaction L-aspartate(in) + sulfate(out) = L-aspartate(out) + sulfate(in). The catalysed reaction is sulfate(in) = sulfate(out). The enzyme catalyses phosphate(in) = phosphate(out). It catalyses the reaction (S)-malate(out) = (S)-malate(in). It carries out the reaction citrate(in) = citrate(out). The catalysed reaction is L-aspartate(out) = L-aspartate(in). The enzyme catalyses L-glutamate(out) = L-glutamate(in). It catalyses the reaction H(+)(in) = H(+)(out). It carries out the reaction chloride(in) = chloride(out). In terms of biological role, transports inorganic anions (sulfate, sulfite, thiosulfate and phosphate) and, to a lesser extent, a variety of dicarboxylates (e.g. malonate, malate and citramalate) and, even more so, aspartate and glutamate and tricarboxylates. May catalyze the export of sulfite and thiosulfate (the hydrogen sulfide degradation products) from the mitochondria, thereby modulating the level of the hydrogen sulfide. Also can mediate a very low unidirectional transport of anions including sulfate, phosphate, (S)-malate, citrate, L-aspartate and L-glutamate. Maintains oxidative balance (through uncoupling activities) and ATP production (by modifying mitochondrial membrane potential). Is able to transport protons across lipid membranes. Also exhibits transmembrane chloride transport activity to a lesser extent. May modify mitochondrial respiratory efficiency and mitochondrial oxidant production. The sequence is that of Brain mitochondrial carrier protein 1 from Mus musculus (Mouse).